A 102-amino-acid polypeptide reads, in one-letter code: S-phase delaying protein 2 (102 aa).

The disordered stretch occupies residues 43–62; sequence FPSYHKDQTDRNELPQQKHD. The segment covering 46 to 62 has biased composition (basic and acidic residues); sequence YHKDQTDRNELPQQKHD.

It belongs to the DIF1/spd1 family.

The protein localises to the cytoplasm. The protein resides in the nucleus. In terms of biological role, regulates the ribonucleotide reductase activity. The sequence is that of S-phase delaying protein 2 (spd2) from Schizosaccharomyces pombe (strain 972 / ATCC 24843) (Fission yeast).